The following is a 310-amino-acid chain: Malate dehydrogenase (310 aa).

Residues 7-12 and D32 each bind NAD(+); that span reads GAGNVG. Residues R81 and R87 each coordinate substrate. NAD(+) is bound by residues N94 and 117–119; that span reads VSN. Substrate-binding residues include N119 and R150. H174 acts as the Proton acceptor in catalysis.

This sequence belongs to the LDH/MDH superfamily. MDH type 3 family.

The catalysed reaction is (S)-malate + NAD(+) = oxaloacetate + NADH + H(+). Its function is as follows. Catalyzes the reversible oxidation of malate to oxaloacetate. The polypeptide is Malate dehydrogenase (Chlorobium limicola (strain DSM 245 / NBRC 103803 / 6330)).